Reading from the N-terminus, the 92-residue chain is 10 kDa late embryogenesis abundant protein (92 aa).

A compositionally biased stretch (polar residues) spans Met1 to Arg10. Positions Met1–Asp92 are disordered. 2 stretches are compositionally biased toward basic and acidic residues: residues Lys11–Lys26 and Lys38–Lys71.

This sequence belongs to the small hydrophilic plant seed protein family. In terms of tissue distribution, maximally expressed in dry seeds. Also present in mid-maturation embryos.

In terms of biological role, LEA proteins are late embryonic proteins abundant in higher plant seed embryos. They may play an essential role in seed survival and in controlling water exchanges during seed desiccation and imbibition. This chain is 10 kDa late embryogenesis abundant protein, found in Helianthus annuus (Common sunflower).